A 931-amino-acid chain; its full sequence is Bifunctional glutamine synthetase adenylyltransferase/adenylyl-removing enzyme (931 aa).

The adenylyl removase stretch occupies residues 1 to 434; that stretch reads MTLAPADLPV…STEFAALLAP (434 aa). Residues 441 to 931 form an adenylyl transferase region; that stretch reads PDALANYWRS…ACRAAELPFA (491 aa).

The protein belongs to the GlnE family. Mg(2+) is required as a cofactor.

The catalysed reaction is [glutamine synthetase]-O(4)-(5'-adenylyl)-L-tyrosine + phosphate = [glutamine synthetase]-L-tyrosine + ADP. The enzyme catalyses [glutamine synthetase]-L-tyrosine + ATP = [glutamine synthetase]-O(4)-(5'-adenylyl)-L-tyrosine + diphosphate. Its function is as follows. Involved in the regulation of glutamine synthetase GlnA, a key enzyme in the process to assimilate ammonia. When cellular nitrogen levels are high, the C-terminal adenylyl transferase (AT) inactivates GlnA by covalent transfer of an adenylyl group from ATP to specific tyrosine residue of GlnA, thus reducing its activity. Conversely, when nitrogen levels are low, the N-terminal adenylyl removase (AR) activates GlnA by removing the adenylyl group by phosphorolysis, increasing its activity. The regulatory region of GlnE binds the signal transduction protein PII (GlnB) which indicates the nitrogen status of the cell. This is Bifunctional glutamine synthetase adenylyltransferase/adenylyl-removing enzyme from Stenotrophomonas maltophilia (strain K279a).